Reading from the N-terminus, the 122-residue chain is Ribosome-binding factor A (122 aa).

The protein belongs to the RbfA family. In terms of assembly, monomer. Binds 30S ribosomal subunits, but not 50S ribosomal subunits or 70S ribosomes.

It is found in the cytoplasm. Functionally, one of several proteins that assist in the late maturation steps of the functional core of the 30S ribosomal subunit. Associates with free 30S ribosomal subunits (but not with 30S subunits that are part of 70S ribosomes or polysomes). Required for efficient processing of 16S rRNA. May interact with the 5'-terminal helix region of 16S rRNA. The sequence is that of Ribosome-binding factor A from Caldanaerobacter subterraneus subsp. tengcongensis (strain DSM 15242 / JCM 11007 / NBRC 100824 / MB4) (Thermoanaerobacter tengcongensis).